A 147-amino-acid chain; its full sequence is Protein archease (147 aa).

Residues Asp-17, Asp-146, and Ile-147 each coordinate Ca(2+).

The protein belongs to the archease family.

In terms of biological role, activates the tRNA-splicing ligase complex by facilitating the enzymatic turnover of catalytic subunit RtcB. Acts by promoting the guanylylation of RtcB, a key intermediate step in tRNA ligation. Can also alter the NTP specificity of RtcB such that ATP, dGTP or ITP is used efficiently. The chain is Protein archease from Pyrobaculum neutrophilum (strain DSM 2338 / JCM 9278 / NBRC 100436 / V24Sta) (Thermoproteus neutrophilus).